We begin with the raw amino-acid sequence, 321 residues long: Polyamine aminopropyltransferase (321 aa).

Positions 23 to 256 constitute a PABS domain; it reads HLLYLEHAGP…DEWSFSFGSD (234 aa). Gln-53 is an S-methyl-5'-thioadenosine binding site. The spermidine site is built by His-84 and Asp-108. Residues Glu-127 and 159 to 160 contribute to the S-methyl-5'-thioadenosine site; that span reads DG. Asp-177 functions as the Proton acceptor in the catalytic mechanism.

It belongs to the spermidine/spermine synthase family. Homodimer or homotetramer.

Its subcellular location is the cytoplasm. The enzyme catalyses S-adenosyl 3-(methylsulfanyl)propylamine + putrescine = S-methyl-5'-thioadenosine + spermidine + H(+). It participates in amine and polyamine biosynthesis; spermidine biosynthesis; spermidine from putrescine: step 1/1. In terms of biological role, catalyzes the irreversible transfer of a propylamine group from the amino donor S-adenosylmethioninamine (decarboxy-AdoMet) to putrescine (1,4-diaminobutane) to yield spermidine. This chain is Polyamine aminopropyltransferase, found in Korarchaeum cryptofilum (strain OPF8).